The primary structure comprises 176 residues: Ribosome maturation factor RimM (176 aa).

The 74-residue stretch at 103-176 (QNDEYYFYEI…KIVVKELEWI (74 aa)) folds into the PRC barrel domain.

The protein belongs to the RimM family. Binds ribosomal protein uS19.

Its subcellular location is the cytoplasm. Its function is as follows. An accessory protein needed during the final step in the assembly of 30S ribosomal subunit, possibly for assembly of the head region. Essential for efficient processing of 16S rRNA. May be needed both before and after RbfA during the maturation of 16S rRNA. It has affinity for free ribosomal 30S subunits but not for 70S ribosomes. This chain is Ribosome maturation factor RimM, found in Thermotoga neapolitana (strain ATCC 49049 / DSM 4359 / NBRC 107923 / NS-E).